Consider the following 100-residue polypeptide: Small ribosomal subunit protein uS14c (100 aa).

It belongs to the universal ribosomal protein uS14 family. As to quaternary structure, part of the 30S ribosomal subunit.

The protein localises to the plastid. The protein resides in the chloroplast. In terms of biological role, binds 16S rRNA, required for the assembly of 30S particles. The sequence is that of Small ribosomal subunit protein uS14c from Nymphaea alba (White water-lily).